We begin with the raw amino-acid sequence, 403 residues long: Argininosuccinate synthase (403 aa).

10-18 contacts ATP; the sequence is AYSGGLDTS. L-citrulline is bound at residue Tyr87. Residue Gly117 coordinates ATP. Thr119, Asn123, and Asp124 together coordinate L-aspartate. Asn123 lines the L-citrulline pocket. L-citrulline contacts are provided by Arg127, Ser175, Ser184, Glu260, and Tyr272.

This sequence belongs to the argininosuccinate synthase family. Type 1 subfamily. Homotetramer.

The protein resides in the cytoplasm. It carries out the reaction L-citrulline + L-aspartate + ATP = 2-(N(omega)-L-arginino)succinate + AMP + diphosphate + H(+). It functions in the pathway amino-acid biosynthesis; L-arginine biosynthesis; L-arginine from L-ornithine and carbamoyl phosphate: step 2/3. This chain is Argininosuccinate synthase, found in Bacillus pumilus (strain SAFR-032).